Reading from the N-terminus, the 358-residue chain is Putative zinc metalloprotease RC0203 (358 aa).

A Zn(2+)-binding site is contributed by His18. Residue Glu19 is part of the active site. His22 contributes to the Zn(2+) binding site. 4 helical membrane-spanning segments follow: residues 52–71 (GVRWKICLIPLGGYVKIYGY), 97–119 (FLIVAAGPLINYLLAIIIFAGFY), 285–307 (YLLFIAMLSVNLGLLNLLPIPVL), and 332–351 (ILLQLGAIIIIFLIIIAVSN). In terms of domain architecture, PDZ spans 102–186 (AGPLINYLLA…STLTIERKSE (85 aa)).

It belongs to the peptidase M50B family. It depends on Zn(2+) as a cofactor.

The protein localises to the cell inner membrane. This chain is Putative zinc metalloprotease RC0203, found in Rickettsia conorii (strain ATCC VR-613 / Malish 7).